The following is a 190-amino-acid chain: Secretory phospholipase A2 (190 aa).

The N-terminal stretch at 1–15 (MKLAYFSSLLPLALA) is a signal peptide. The cysteines at positions 62 and 78 are disulfide-linked. Position 65 (alanine 65) interacts with Ca(2+). The active site involves histidine 81. Aspartate 82 lines the Ca(2+) pocket.

Belongs to the phospholipase A2 family. Ca(2+) serves as cofactor.

It is found in the lipid droplet. The protein localises to the secreted. The catalysed reaction is a 1,2-diacyl-sn-glycero-3-phosphocholine + H2O = a 1-acyl-sn-glycero-3-phosphocholine + a fatty acid + H(+). In terms of biological role, secretory phospholipase that catalyzes the calcium-dependent hydrolysis of the 2-acyl groups in 3-sn-phosphoglycerides. Increases the ability to utilize insect-derived nutrients and lipids, and promotes lipid dropplets accumulation. Plays a role in virulence, including more efficient penetration of the insect cuticle and evasion of host immune response by repressing the expression of host immunity genes. This Beauveria bassiana (strain ARSEF 2860) (White muscardine disease fungus) protein is Secretory phospholipase A2.